The primary structure comprises 69 residues: Bacteriocin microcin B17 (69 aa).

A propeptide spanning residues 1–26 (MELKASEFGVVLSVDALKLSRQSPLG) is cleaved from the precursor. A cross-link (oxazole-4-carboxylic acid (Gly-Ser)) is located at residues 39-40 (GS). Positions 40–41 (SC) form a cross-link, thiazole-4-carboxylic acid (Ser-Cys). 3 cross-links (thiazole-4-carboxylic acid (Gly-Cys)) span residues 47–48 (GC), 50–51 (GC), and 54–55 (GC). A cross-link (oxazole-4-carboxylic acid (Cys-Ser)) is located at residues 55–56 (CS). 2 cross-links (oxazole-4-carboxylic acid (Gly-Ser)) span residues 61 to 62 (GS) and 64 to 65 (GS).

Post-translationally, the processed N-terminus does not resemble a typical secretion signal sequence. In terms of processing, maturation of thiazole and oxazole containing antibiotics involves the enzymatic condensation of a Cys, Ser or Thr with the alpha-carbonyl of the preceding amino acid to form a thioether or ether bond, then dehydration to form a double bond with the alpha-amino nitrogen. Thiazoline or oxazoline rings are dehydrogenated to form thiazole or oxazole rings.

Functionally, this glycine-rich peptide antibiotic inhibits DNA replication in many enteric bacteria, that leads to induction of the SOS repair system, massive DNA degradation and cell death. B17 inhibits type II topoisomerase by trapping an enzyme - DNA cleavable complex. The protein is Bacteriocin microcin B17 (mcbA) of Escherichia coli.